We begin with the raw amino-acid sequence, 325 residues long: tRNA dimethylallyltransferase (325 aa).

11–18 (GPTASGKS) contributes to the ATP binding site. 13–18 (TASGKS) contacts substrate. Interaction with substrate tRNA stretches follow at residues 36–39 (DSMQ) and 160–164 (QRLIR).

Belongs to the IPP transferase family. As to quaternary structure, monomer. The cofactor is Mg(2+).

It catalyses the reaction adenosine(37) in tRNA + dimethylallyl diphosphate = N(6)-dimethylallyladenosine(37) in tRNA + diphosphate. In terms of biological role, catalyzes the transfer of a dimethylallyl group onto the adenine at position 37 in tRNAs that read codons beginning with uridine, leading to the formation of N6-(dimethylallyl)adenosine (i(6)A). The polypeptide is tRNA dimethylallyltransferase (Rickettsia canadensis (strain McKiel)).